The sequence spans 631 residues: 1-deoxy-D-xylulose-5-phosphate synthase (631 aa).

Residues histidine 72 and 113–115 (GHA) contribute to the thiamine diphosphate site. Aspartate 144 lines the Mg(2+) pocket. Residues 145-146 (GA), asparagine 174, tyrosine 287, and glutamate 370 each bind thiamine diphosphate. Asparagine 174 lines the Mg(2+) pocket.

It belongs to the transketolase family. DXPS subfamily. In terms of assembly, homodimer. Mg(2+) is required as a cofactor. Requires thiamine diphosphate as cofactor.

The enzyme catalyses D-glyceraldehyde 3-phosphate + pyruvate + H(+) = 1-deoxy-D-xylulose 5-phosphate + CO2. Its pathway is metabolic intermediate biosynthesis; 1-deoxy-D-xylulose 5-phosphate biosynthesis; 1-deoxy-D-xylulose 5-phosphate from D-glyceraldehyde 3-phosphate and pyruvate: step 1/1. Its function is as follows. Catalyzes the acyloin condensation reaction between C atoms 2 and 3 of pyruvate and glyceraldehyde 3-phosphate to yield 1-deoxy-D-xylulose-5-phosphate (DXP). This is 1-deoxy-D-xylulose-5-phosphate synthase from Prochlorococcus marinus (strain MIT 9515).